Reading from the N-terminus, the 239-residue chain is MRLNAEFLSQVPSFISPLKETELDLRWYQIPIIENLGVLRDVHDAIDFTDNDIRYLGNFPRMKRLQTLLCGNNRITAIAPDIGKVLPNLKTLSLAQNHLQEIADLDPLASCPQLTNLSCIDNPVAQKQYYRLYLIWRIPSLHILDFERVRRNERLRAEEVFGQIQNPTEIASSIMGVKSRVFDLAALVQSHPEANSPITTGYTLTPEEREKIKEAIKNASSIAEINRLEAMLLEGKIPK.

LRR repeat units lie at residues 19 to 40, 42 to 63, 64 to 85, and 88 to 109; these read KETE…GVLR, VHDA…PRMK, RLQT…IGKV, and NLKT…DPLA. Positions 122–160 constitute an LRRCT domain; sequence NPVAQKQYYRLYLIWRIPSLHILDFERVRRNERLRAEEV.

It belongs to the U2 small nuclear ribonucleoprotein A family. As to quaternary structure, belongs to the 40S cdc5-associated complex (or cwf complex), a spliceosome sub-complex reminiscent of a late-stage spliceosome composed of the U2, U5 and U6 snRNAs and at least brr2, cdc5, cwf2/prp3, cwf3/syf1, cwf4/syf3, cwf5/ecm2, spp42/cwf6, cwf7/spf27, cwf8, cwf9, cwf10, cwf11, cwf12, prp45/cwf13, cwf14, cwf15, cwf16, cwf17, cwf18, cwf19, cwf20, cwf21, cwf22, cwf23, cwf24, cwf25, cwf26, cyp7/cwf27, cwf28, cwf29/ist3, lea1, msl1, prp5/cwf1, prp10, prp12/sap130, prp17, prp22, sap61, sap62, sap114, sap145, slu7, smb1, smd1, smd3, smf1, smg1 and syf2.

It localises to the nucleus. Involved in pre-mRNA splicing. This protein is associated with sn-RNP U2. It helps the A' protein to bind stem loop IV of U2 snRNA. In Schizosaccharomyces pombe (strain 972 / ATCC 24843) (Fission yeast), this protein is U2 small nuclear ribonucleoprotein A' (lea1).